A 268-amino-acid chain; its full sequence is AB hydrolase superfamily protein YisY (268 aa).

The region spanning 23-254 (PIIFLHGWPL…NSGHGAFYEE (232 aa)) is the AB hydrolase-1 domain. Active-site residues include serine 96, aspartate 220, and histidine 248.

The protein belongs to the AB hydrolase superfamily.

In Bacillus subtilis (strain 168), this protein is AB hydrolase superfamily protein YisY (yisY).